The primary structure comprises 699 residues: Polyribonucleotide nucleotidyltransferase (699 aa).

Mg(2+)-binding residues include Asp485 and Asp491. The KH domain occupies 552 to 611; that stretch reads PRITTIKINPEKIRDVIGKGGAVIRALTEETGTTIELEDDGTVKIASNNGDATREAIRRI. The S1 motif domain occupies 621-689; that stretch reads GRLYTGKVIR…RQGRVRLSIK (69 aa).

Belongs to the polyribonucleotide nucleotidyltransferase family. In terms of assembly, component of the RNA degradosome, which is a multiprotein complex involved in RNA processing and mRNA degradation. Requires Mg(2+) as cofactor.

Its subcellular location is the cytoplasm. It carries out the reaction RNA(n+1) + phosphate = RNA(n) + a ribonucleoside 5'-diphosphate. In terms of biological role, involved in mRNA degradation. Catalyzes the phosphorolysis of single-stranded polyribonucleotides processively in the 3'- to 5'-direction. The chain is Polyribonucleotide nucleotidyltransferase from Shewanella amazonensis (strain ATCC BAA-1098 / SB2B).